The following is a 109-amino-acid chain: Cell division protein ZapA (109 aa).

Positions 21–97 (PEQQEALNQA…QTIEQALVEQ (77 aa)) form a coiled coil.

This sequence belongs to the ZapA family. Type 1 subfamily. Homodimer. Interacts with FtsZ.

The protein resides in the cytoplasm. Its function is as follows. Activator of cell division through the inhibition of FtsZ GTPase activity, therefore promoting FtsZ assembly into bundles of protofilaments necessary for the formation of the division Z ring. It is recruited early at mid-cell but it is not essential for cell division. The chain is Cell division protein ZapA from Sodalis glossinidius (strain morsitans).